Here is a 229-residue protein sequence, read N- to C-terminus: Wtf element wtf14 (229 aa).

The segment covering 1–26 has biased composition (basic and acidic residues); it reads MENNHHLAKDSLDELNPKRGKGEHET. The interval 1–27 is disordered; it reads MENNHHLAKDSLDELNPKRGKGEHETQ. Helical transmembrane passes span 71–91, 100–120, 151–171, and 188–208; these read IPAV…YLVF, VLFG…LLAT, LYAI…LMFF, and VIGV…PGLF.

The protein belongs to the WTF family.

It localises to the endoplasmic reticulum membrane. Functionally, may act in meiotic drive. The sequence is that of Wtf element wtf14 from Schizosaccharomyces pombe (strain 972 / ATCC 24843) (Fission yeast).